Here is a 91-residue protein sequence, read N- to C-terminus: Small ribosomal subunit protein uS19 (91 aa).

Residues methionine 1–lysine 32 are disordered. The segment covering proline 9–valine 19 has biased composition (basic and acidic residues).

This sequence belongs to the universal ribosomal protein uS19 family.

Functionally, protein S19 forms a complex with S13 that binds strongly to the 16S ribosomal RNA. The sequence is that of Small ribosomal subunit protein uS19 from Acidithiobacillus ferrooxidans (strain ATCC 53993 / BNL-5-31) (Leptospirillum ferrooxidans (ATCC 53993)).